Consider the following 233-residue polypeptide: tRNA pseudouridine synthase B (233 aa).

The Nucleophile role is filled by Asp48.

This sequence belongs to the pseudouridine synthase TruB family. Type 1 subfamily.

The catalysed reaction is uridine(55) in tRNA = pseudouridine(55) in tRNA. Responsible for synthesis of pseudouridine from uracil-55 in the psi GC loop of transfer RNAs. The chain is tRNA pseudouridine synthase B from Bacteroides fragilis (strain ATCC 25285 / DSM 2151 / CCUG 4856 / JCM 11019 / LMG 10263 / NCTC 9343 / Onslow / VPI 2553 / EN-2).